We begin with the raw amino-acid sequence, 1221 residues long: DNA topoisomerase 2 (1221 aa).

Residues Asn-65, Asn-94, 122–124 (SSN), 135–142 (GRHGYGAK), and 352–354 (QNK) contribute to the ATP site. One can recognise a Toprim domain in the interval 432–546 (RTLIVTEGDS…SLLVRNPGFI (115 aa)). Positions 438, 515, and 517 each coordinate Mg(2+). Positions 681 to 1097 (LAHSVDGLKP…TPVQLWLGEL (417 aa)) constitute a Topo IIA-type catalytic domain. The active-site O-(5'-phospho-DNA)-tyrosine intermediate is the Tyr-771. Positions 952 to 961 (GLTQRIHING) are interaction with DNA. Positions 1158 to 1198 (VPPPTKRGAGGRSDGDGGATAAGAAAAVGGRGEKKGPGRAG) are disordered. Positions 1165 to 1177 (GAGGRSDGDGGAT) are enriched in gly residues.

This sequence belongs to the type II topoisomerase family. In terms of assembly, homodimer. Mg(2+) serves as cofactor. The cofactor is Mn(2+). Requires Ca(2+) as cofactor.

The protein resides in the nucleus. The enzyme catalyses ATP-dependent breakage, passage and rejoining of double-stranded DNA.. Control of topological states of DNA by transient breakage and subsequent rejoining of DNA strands. Topoisomerase II makes double-strand breaks. The chain is DNA topoisomerase 2 (TOP2) from Trypanosoma brucei brucei.